A 185-amino-acid chain; its full sequence is Threonylcarbamoyl-AMP synthase (185 aa).

The YrdC-like domain maps to 4 to 185 (SWRVQQAAQN…IATGQVMRAG (182 aa)).

This sequence belongs to the SUA5 family. TsaC subfamily.

It localises to the cytoplasm. The enzyme catalyses L-threonine + hydrogencarbonate + ATP = L-threonylcarbamoyladenylate + diphosphate + H2O. Required for the formation of a threonylcarbamoyl group on adenosine at position 37 (t(6)A37) in tRNAs that read codons beginning with adenine. Catalyzes the conversion of L-threonine, HCO(3)(-)/CO(2) and ATP to give threonylcarbamoyl-AMP (TC-AMP) as the acyladenylate intermediate, with the release of diphosphate. This is Threonylcarbamoyl-AMP synthase from Pseudomonas syringae pv. tomato (strain ATCC BAA-871 / DC3000).